The chain runs to 213 residues: ER lumen protein-retaining receptor (213 aa).

Topologically, residues 1–2 (MN) are lumenal. Residues 3–21 (IFRITADLAHAVAIVILLL) traverse the membrane as a helical segment. Topologically, residues 22–35 (KIWKSRSCEGISGR) are cytoplasmic. Residues 36–53 (SQILFAVTFFTRYLDLFT) form a helical membrane-spanning segment. Residues 54-61 (SFYSLYNT) are Lumenal-facing. A helical transmembrane segment spans residues 62 to 80 (VMKVLFLAGSIGTVYLMWV). The Cytoplasmic portion of the chain corresponds to 81–96 (KFKATYDRNNDTFRIE). Residues 97–110 (FLVIPSIILALIIN) form a helical membrane-spanning segment. Residues 111–117 (HEFMFME) are Lumenal-facing. Residues 118–137 (VMWTFSIYLEAVAIMPQLFM) form a helical membrane-spanning segment. The Cytoplasmic segment spans residues 138–149 (LSRTGNAETITA). Residues 150–168 (HYLFALGSYRFLYIFNWVY) traverse the membrane as a helical segment. Topologically, residues 169–178 (RYYTESFFDP) are lumenal. Residues 179–199 (IAVVAGIVQTVLYADFFYLYI) traverse the membrane as a helical segment. The Cytoplasmic portion of the chain corresponds to 200-213 (TRVIQSNRQFEMSA).

This sequence belongs to the ERD2 family.

It is found in the endoplasmic reticulum membrane. Required for the retention of luminal endoplasmic reticulum proteins. Determines the specificity of the luminal ER protein retention system. Also required for normal vesicular traffic through the Golgi. The chain is ER lumen protein-retaining receptor (erd-2.1) from Caenorhabditis briggsae.